The chain runs to 164 residues: V-type proton ATPase 16 kDa proteolipid subunit (164 aa).

The Lumenal portion of the chain corresponds to 1–10; sequence MSDLCPPTAP. The chain crosses the membrane as a helical span at residues 11-31; that stretch reads FFGFMGAAVALIFANLGAAYG. At 32–53 the chain is on the cytoplasmic side; that stretch reads TAKSGVGVSSMGVMKPDLVMKS. Residues 54–74 traverse the membrane as a helical segment; that stretch reads IIPVVMAGVLGIYGLIIAVII. The Lumenal segment spans residues 75 to 96; sequence GNGVKGPEGGKPQYSSFTGFAH. The helical transmembrane segment at 97–118 threads the bilayer; it reads LAAGLACGLSGMAAGIAIGIVG. The Cytoplasmic portion of the chain corresponds to 119-130; that stretch reads DAGVRASAQQAK. The helical transmembrane segment at 131 to 155 threads the bilayer; sequence LYVGMVLILIFAEALGLYGLIVGLI. Residues 156–164 lie on the Lumenal side of the membrane; it reads LTSKEAPCS.

It belongs to the V-ATPase proteolipid subunit family. V-ATPase is a heteromultimeric enzyme composed of a peripheral catalytic V1 complex (main components: subunits A, B, C, D, E, and F) attached to an integral membrane V0 proton pore complex (main component: the proteolipid protein; which is present as a hexamer that forms the proton-conducting pore).

The protein resides in the vacuole membrane. Its function is as follows. Proton-conducting pore forming subunit of the membrane integral V0 complex of vacuolar ATPase. V-ATPase is responsible for acidifying a variety of intracellular compartments in eukaryotic cells. This chain is V-type proton ATPase 16 kDa proteolipid subunit (VAP), found in Chrysotila carterae (Marine alga).